The following is a 96-amino-acid chain: Prokineticin Bo8 (96 aa).

Positions 1 to 19 (MKCFAQIVVLLLVIAFSHG) are cleaved as a signal peptide. 5 disulfide bridges follow: C26–C38, C32–C50, C37–C78, C60–C86, and C80–C95.

Expressed by the skin glands.

The protein resides in the secreted. Potent agonist for both PKR1/PROKR1 and PKR2/PROKR2, and inducer of a potent and long-lasting hyperalgesia. Also potentiates capsaicin-induced TRPV1 current, when tested on DRG neurons. At subnanomolar concentrations, this protein both induces potent chemotaxis of macrophages and stimulates LPS-induced production of the pro-inflammatory cytokines IL-1 and IL-12. In vivo, potently stimulates the contraction of the guinea-pig gastrointestinal (GI) smooth muscle (nanomolar concentration). This chain is Prokineticin Bo8, found in Bombina orientalis (Oriental fire-bellied toad).